We begin with the raw amino-acid sequence, 347 residues long: Cytoplasmic tRNA 2-thiolation protein 1 (347 aa).

S200 carries the phosphoserine modification. Positions 315-347 (LAIGKGRRGLDEEGPPREPQPSRPLTSEPVPDF) are disordered.

This sequence belongs to the TtcA family. CTU1/NCS6/ATPBD3 subfamily. In terms of assembly, component of a complex at least composed of URM1, CTU2/NCS2 and CTU1/ATPBD3. May form a heterodimer with CTU2/NCS2.

It localises to the cytoplasm. It participates in tRNA modification; 5-methoxycarbonylmethyl-2-thiouridine-tRNA biosynthesis. Its function is as follows. Plays a central role in 2-thiolation of mcm(5)S(2)U at tRNA wobble positions of tRNA(Lys), tRNA(Glu) and tRNA(Gln). Directly binds tRNAs and probably acts by catalyzing adenylation of tRNAs, an intermediate required for 2-thiolation. It is unclear whether it acts as a sulfurtransferase that transfers sulfur from thiocarboxylated URM1 onto the uridine of tRNAs at wobble position. The polypeptide is Cytoplasmic tRNA 2-thiolation protein 1 (Bos taurus (Bovine)).